We begin with the raw amino-acid sequence, 165 residues long: Large ribosomal subunit protein uL15 (165 aa).

The segment at 1–44 (MSLNQLKAPRGANRAKKRVGRGQGSGLGKTAGRGGKGQKARSGN) is disordered. Gly residues predominate over residues 21–37 (RGQGSGLGKTAGRGGKG).

This sequence belongs to the universal ribosomal protein uL15 family. In terms of assembly, part of the 50S ribosomal subunit.

Binds to the 23S rRNA. This chain is Large ribosomal subunit protein uL15, found in Anaeromyxobacter dehalogenans (strain 2CP-C).